The following is a 299-amino-acid chain: ATP phosphoribosyltransferase (299 aa).

The protein belongs to the ATP phosphoribosyltransferase family. Long subfamily. As to quaternary structure, equilibrium between an active dimeric form, an inactive hexameric form and higher aggregates. Interconversion between the various forms is largely reversible and is influenced by the natural substrates and inhibitors of the enzyme. Requires Mg(2+) as cofactor.

It localises to the cytoplasm. The enzyme catalyses 1-(5-phospho-beta-D-ribosyl)-ATP + diphosphate = 5-phospho-alpha-D-ribose 1-diphosphate + ATP. Its pathway is amino-acid biosynthesis; L-histidine biosynthesis; L-histidine from 5-phospho-alpha-D-ribose 1-diphosphate: step 1/9. Its activity is regulated as follows. Feedback inhibited by histidine. Functionally, catalyzes the condensation of ATP and 5-phosphoribose 1-diphosphate to form N'-(5'-phosphoribosyl)-ATP (PR-ATP). Has a crucial role in the pathway because the rate of histidine biosynthesis seems to be controlled primarily by regulation of HisG enzymatic activity. The protein is ATP phosphoribosyltransferase of Buchnera aphidicola subsp. Diuraphis noxia.